Consider the following 514-residue polypeptide: 2-isopropylmalate synthase (514 aa).

A Pyruvate carboxyltransferase domain is found at 5-268 (LIIFDTTLRD…DVGLDTTQIV (264 aa)). Residues Asp14, His202, His204, and Asn239 each coordinate Mn(2+). The interval 395-514 (KFVSLSQRSE…KDDKLNPQRS (120 aa)) is regulatory domain.

The protein belongs to the alpha-IPM synthase/homocitrate synthase family. LeuA type 1 subfamily. In terms of assembly, homodimer. The cofactor is Mn(2+).

The protein localises to the cytoplasm. The enzyme catalyses 3-methyl-2-oxobutanoate + acetyl-CoA + H2O = (2S)-2-isopropylmalate + CoA + H(+). The protein operates within amino-acid biosynthesis; L-leucine biosynthesis; L-leucine from 3-methyl-2-oxobutanoate: step 1/4. Its function is as follows. Catalyzes the condensation of the acetyl group of acetyl-CoA with 3-methyl-2-oxobutanoate (2-ketoisovalerate) to form 3-carboxy-3-hydroxy-4-methylpentanoate (2-isopropylmalate). The polypeptide is 2-isopropylmalate synthase (Burkholderia ambifaria (strain MC40-6)).